The sequence spans 160 residues: Ribosomal RNA large subunit methyltransferase H (160 aa).

S-adenosyl-L-methionine is bound by residues leucine 77, glycine 109, and 128–133; that span reads FSRLTF.

It belongs to the RNA methyltransferase RlmH family. In terms of assembly, homodimer.

Its subcellular location is the cytoplasm. It catalyses the reaction pseudouridine(1915) in 23S rRNA + S-adenosyl-L-methionine = N(3)-methylpseudouridine(1915) in 23S rRNA + S-adenosyl-L-homocysteine + H(+). In terms of biological role, specifically methylates the pseudouridine at position 1915 (m3Psi1915) in 23S rRNA. The protein is Ribosomal RNA large subunit methyltransferase H of Desulfitobacterium hafniense (strain Y51).